Here is a 163-residue protein sequence, read N- to C-terminus: Nucleotide-binding protein RHA1_ro01989 (163 aa).

This sequence belongs to the YajQ family.

Nucleotide-binding protein. The protein is Nucleotide-binding protein RHA1_ro01989 of Rhodococcus jostii (strain RHA1).